We begin with the raw amino-acid sequence, 196 residues long: Putative manganese efflux pump MntP (196 aa).

A run of 6 helical transmembrane segments spans residues 3 to 23 (PASL…ASIG), 39 to 59 (IGAV…ALGH), 67 to 87 (GVDH…MIWA), 109 to 129 (IWLI…VGIT), 137 to 157 (IIAA…LGTL), and 172 to 192 (ILGG…HLAG).

It belongs to the MntP (TC 9.B.29) family.

The protein resides in the cell inner membrane. Its function is as follows. Probably functions as a manganese efflux pump. In Chromohalobacter salexigens (strain ATCC BAA-138 / DSM 3043 / CIP 106854 / NCIMB 13768 / 1H11), this protein is Putative manganese efflux pump MntP.